Reading from the N-terminus, the 48-residue chain is MAVPDRRVSKTRAAKRRTHYSVKLAKPIKAKDGTWKLPHHINKFTKEY.

The disordered stretch occupies residues 1–20 (MAVPDRRVSKTRAAKRRTHY). Basic residues predominate over residues 9–20 (SKTRAAKRRTHY).

This sequence belongs to the bacterial ribosomal protein bL32 family.

The sequence is that of Large ribosomal subunit protein bL32 from Helicobacter acinonychis (strain Sheeba).